A 119-amino-acid chain; its full sequence is MAPIQEYVGTLIYVGVALFIGVAALLVGALLGPKKPGRAKLMPYESGNDPAGEVKRFPVHFYVVAMLFILFDVEVAFLWPYAVSAGGLGLYGFLGVLAFTLLLFVGFLYEWWKGVMRWH.

3 helical membrane passes run Leu11 to Leu31, Val59 to Trp79, and Leu88 to Leu108.

This sequence belongs to the complex I subunit 3 family. In terms of assembly, NDH-1 is composed of 15 different subunits, Nqo1 to Nqo15. The complex has a L-shaped structure, with the hydrophobic arm (subunits Nqo7, Nqo8 and Nqo10 to Nqo14) embedded in the membrane and the hydrophilic peripheral arm (subunits Nqo1 to Nqo6, Nqo9 and Nqo15) protruding into the bacterial cytoplasm. The hydrophilic domain contains all the redox centers.

The protein resides in the cell inner membrane. The enzyme catalyses a quinone + NADH + 5 H(+)(in) = a quinol + NAD(+) + 4 H(+)(out). NDH-1 shuttles electrons from NADH, via FMN and iron-sulfur (Fe-S) centers, to quinones in the respiratory chain. The immediate electron acceptor for the enzyme in this species is menaquinone. Couples the redox reaction to proton translocation (for every two electrons transferred, four hydrogen ions are translocated across the cytoplasmic membrane), and thus conserves the redox energy in a proton gradient required for the synthesis of ATP. This is NADH-quinone oxidoreductase subunit 7 (nqo7) from Thermus thermophilus (strain ATCC 27634 / DSM 579 / HB8).